The sequence spans 663 residues: DNA ligase (663 aa).

Residues 33–37, 82–83, and glutamate 112 contribute to the NAD(+) site; these read DYSYD and SI. The active-site N6-AMP-lysine intermediate is lysine 114. The NAD(+) site is built by arginine 135, glutamate 171, lysine 285, and lysine 309. Cysteine 403, cysteine 406, cysteine 419, and cysteine 424 together coordinate Zn(2+). The region spanning 581 to 663 is the BRCT domain; it reads DKEAPLQGKV…LRILDAKSVS (83 aa).

The protein belongs to the NAD-dependent DNA ligase family. LigA subfamily. The cofactor is Mg(2+). Requires Mn(2+) as cofactor.

It catalyses the reaction NAD(+) + (deoxyribonucleotide)n-3'-hydroxyl + 5'-phospho-(deoxyribonucleotide)m = (deoxyribonucleotide)n+m + AMP + beta-nicotinamide D-nucleotide.. Functionally, DNA ligase that catalyzes the formation of phosphodiester linkages between 5'-phosphoryl and 3'-hydroxyl groups in double-stranded DNA using NAD as a coenzyme and as the energy source for the reaction. It is essential for DNA replication and repair of damaged DNA. This is DNA ligase from Chlamydia trachomatis serovar D (strain ATCC VR-885 / DSM 19411 / UW-3/Cx).